The primary structure comprises 194 residues: Protein GrpE 1 (194 aa).

The disordered stretch occupies residues 1 to 22 (MIHNEEEQLEKKIEKNQDPKIN).

It belongs to the GrpE family. In terms of assembly, homodimer.

The protein localises to the cytoplasm. Its function is as follows. Participates actively in the response to hyperosmotic and heat shock by preventing the aggregation of stress-denatured proteins, in association with DnaK and GrpE. It is the nucleotide exchange factor for DnaK and may function as a thermosensor. Unfolded proteins bind initially to DnaJ; upon interaction with the DnaJ-bound protein, DnaK hydrolyzes its bound ATP, resulting in the formation of a stable complex. GrpE releases ADP from DnaK; ATP binding to DnaK triggers the release of the substrate protein, thus completing the reaction cycle. Several rounds of ATP-dependent interactions between DnaJ, DnaK and GrpE are required for fully efficient folding. This Buchnera aphidicola subsp. Acyrthosiphon pisum (strain APS) (Acyrthosiphon pisum symbiotic bacterium) protein is Protein GrpE 1.